A 1400-amino-acid chain; its full sequence is Alpha-(1-&gt;3)-arabinofuranosyltransferase (1400 aa).

The signal sequence occupies residues 1 to 30; the sequence is MAPLSRKWLPVVGAVALALTFAQSPGQVSP. The next 8 membrane-spanning stretches (helical) occupy residues 67–87, 91–111, 139–159, 179–199, 215–235, 282–302, 314–334, and 401–421; these read YLFP…PGWV, LWWA…AEAL, ISSE…TILA, VALM…PAVI, AWWL…LTQL, LVTG…GLAG, LVTM…GGLA, and VAVA…AWTG. The region spanning 700–883 is the F5/8 type C domain; it reads AEPVVGGWTG…WDLGSELLGR (184 aa). Transmembrane regions (helical) follow at residues 1256 to 1276, 1297 to 1317, 1338 to 1358, and 1369 to 1389; these read LYRA…LLAF, WAAA…GVMV, VTVG…SRHP, and WASV…SVVA.

The protein localises to the membrane. It carries out the reaction Adds an alpha-D-arabinofuranosyl group from trans,octacis-decaprenylphospho-beta-D-arabinofuranose at the 3-O-position of an alpha-(1-&gt;5)-arabinofuranan chain attached to a beta-(1-&gt;5)-galactofuranan chain.. The protein operates within cell wall biogenesis; cell wall polysaccharide biosynthesis. Involved in the biosynthesis of the arabinogalactan (AG) region of the mycolylarabinogalactan-peptidoglycan (mAGP) complex, an essential component of the mycobacterial cell wall. Catalyzes the addition of an arabinofuranosyl (Araf) residue from the sugar donor decaprenyl-phospho-arabinose (DPA) on the C-3 of an alpha-(1-&gt;5)-linked Araf from the arabinan backbone of AG. This chain is Alpha-(1-&gt;3)-arabinofuranosyltransferase (aftD), found in Mycobacterium tuberculosis (strain ATCC 25618 / H37Rv).